The following is a 469-amino-acid chain: Alpha-galactosidase (469 aa).

Residues 1 to 17 form the signal peptide; sequence MFPFFFALFFSSTDVLA. Cys41 and Cys73 are oxidised to a cystine. Residues Asp71 and Asp72 each contribute to the substrate site. N-linked (GlcNAc...) asparagine glycosylation occurs at Asn81. A disulfide bridge connects residues Cys120 and Cys150. Lys146 serves as a coordination point for substrate. The active-site Nucleophile is the Asp148. Asn174 carries an N-linked (GlcNAc...) asparagine glycan. A substrate-binding site is contributed by Arg204. Residue Asp208 is the Proton donor of the active site. Disulfide bonds link Cys220–Cys236 and Cys222–Cys229. Gln250 contacts substrate. 7 N-linked (GlcNAc...) asparagine glycosylation sites follow: Asn269, Asn369, Asn402, Asn412, Asn421, Asn426, and Asn434.

The protein belongs to the glycosyl hydrolase 27 family. In terms of assembly, homotetramer.

The protein localises to the secreted. The enzyme catalyses Hydrolysis of terminal, non-reducing alpha-D-galactose residues in alpha-D-galactosides, including galactose oligosaccharides, galactomannans and galactolipids.. In Lachancea cidri (Yeast), this protein is Alpha-galactosidase (MEL).